The following is a 454-amino-acid chain: Cerebellar degeneration-related protein 2 (454 aa).

2 coiled-coil regions span residues glutamate 44–glycine 142 and glutamate 192–histidine 265. The tract at residues glutamate 134 to lysine 153 is disordered. Serine 311 is subject to Phosphoserine. A coiled-coil region spans residues leucine 346–glutamine 380.

It belongs to the CDR2 family.

The chain is Cerebellar degeneration-related protein 2 (CDR2) from Homo sapiens (Human).